A 591-amino-acid chain; its full sequence is Thiol:disulfide interchange protein DsbD 1 (591 aa).

Residues 1–18 (MRRLLTLILLLVALPAGA) form the signal peptide. Residues 19–175 (GLFDSRPGAS…GPLEHKGKRS (157 aa)) lie on the Periplasmic side of the membrane. 2 disulfides stabilise this stretch: Cys-134–Cys-140 and Cys-191–Cys-313. A helical transmembrane segment spans residues 176 to 196 (LLFFFLAGLTLTFTPCVLPML). At 197-213 (PILSGVVLRGRPGGGRG) the chain is on the cytoplasmic side. A helical transmembrane segment spans residues 214-234 (FVLSLAYVLPMALCFALLGAL). Topologically, residues 235–251 (MGMFGASLNLQAQLQSP) are periplasmic. The chain crosses the membrane as a helical span at residues 252-272 (WVLVPFAAFFALFAVAMFGFF). Over 273-295 (ELRLPGFIREPLDRLAGDARGGS) the chain is Cytoplasmic. The chain crosses the membrane as a helical span at residues 296–316 (ILGAATLGVLSSLLVSPCVSA). Over 317–338 (PLAASLLYISASGDAWGGGLQL) the chain is Periplasmic. The helical transmembrane segment at 339–359 (FALGLGMGTPLVVFGAGGGAL) threads the bilayer. The Cytoplasmic portion of the chain corresponds to 360-365 (LPKSGA). Residues 366-386 (WMNGVRNAFGVLLLAVAVWLL) form a helical membrane-spanning segment. Topologically, residues 387–392 (ERVVSG) are periplasmic. Residues 393–413 (PVALMLWGMLAGGAGLALGAL) form a helical membrane-spanning segment. At 414–423 (EFTPKSAARR) the chain is on the cytoplasmic side. The helical transmembrane segment at 424–444 (LLQLLGLMFLTYAVAAWIGAL) threads the bilayer. Topologically, residues 445-591 (QGESDPIHPL…ERLRRAATRQ (147 aa)) are periplasmic. The region spanning 452-589 (HPLGRSVPSI…LAERLRRAAT (138 aa)) is the Thioredoxin domain. Cys-504 and Cys-507 are disulfide-bonded.

This sequence belongs to the thioredoxin family. DsbD subfamily.

It is found in the cell inner membrane. The enzyme catalyses [protein]-dithiol + NAD(+) = [protein]-disulfide + NADH + H(+). The catalysed reaction is [protein]-dithiol + NADP(+) = [protein]-disulfide + NADPH + H(+). Functionally, required to facilitate the formation of correct disulfide bonds in some periplasmic proteins and for the assembly of the periplasmic c-type cytochromes. Acts by transferring electrons from cytoplasmic thioredoxin to the periplasm. This transfer involves a cascade of disulfide bond formation and reduction steps. This is Thiol:disulfide interchange protein DsbD 1 from Pseudomonas aeruginosa (strain ATCC 15692 / DSM 22644 / CIP 104116 / JCM 14847 / LMG 12228 / 1C / PRS 101 / PAO1).